Consider the following 310-residue polypeptide: HPr kinase/phosphorylase (310 aa).

Residues His-136 and Lys-157 contribute to the active site. 151 to 158 (GDSGIGKS) serves as a coordination point for ATP. Ser-158 contributes to the Mg(2+) binding site. The active-site Proton acceptor; for phosphorylation activity. Proton donor; for dephosphorylation activity is the Asp-175. The segment at 199 to 208 (LEIRGLGIIN) is important for the catalytic mechanism of both phosphorylation and dephosphorylation. Mg(2+) is bound at residue Glu-200. Residue Arg-241 is part of the active site. Residues 262 to 267 (PVRPGR) are important for the catalytic mechanism of dephosphorylation.

Belongs to the HPrK/P family. In terms of assembly, homohexamer. Mg(2+) is required as a cofactor.

The catalysed reaction is [HPr protein]-L-serine + ATP = [HPr protein]-O-phospho-L-serine + ADP + H(+). It catalyses the reaction [HPr protein]-O-phospho-L-serine + phosphate + H(+) = [HPr protein]-L-serine + diphosphate. In terms of biological role, catalyzes the ATP- as well as the pyrophosphate-dependent phosphorylation of a specific serine residue in HPr, a phosphocarrier protein of the phosphoenolpyruvate-dependent sugar phosphotransferase system (PTS). HprK/P also catalyzes the pyrophosphate-producing, inorganic phosphate-dependent dephosphorylation (phosphorolysis) of seryl-phosphorylated HPr (P-Ser-HPr). The two antagonistic activities of HprK/P are regulated by several intracellular metabolites, which change their concentration in response to the absence or presence of rapidly metabolisable carbon sources (glucose, fructose, etc.) in the growth medium. Therefore, by controlling the phosphorylation state of HPr, HPrK/P is a sensor enzyme that plays a major role in the regulation of carbon metabolism and sugar transport: it mediates carbon catabolite repression (CCR), and regulates PTS-catalyzed carbohydrate uptake and inducer exclusion. This is HPr kinase/phosphorylase from Staphylococcus epidermidis (strain ATCC 35984 / DSM 28319 / BCRC 17069 / CCUG 31568 / BM 3577 / RP62A).